The chain runs to 216 residues: Uracil phosphoribosyltransferase (216 aa).

Residues R85, R110, and 135 to 143 (DPMVATGYS) each bind 5-phospho-alpha-D-ribose 1-diphosphate. Uracil contacts are provided by residues I200 and 205-207 (GDA). D206 lines the 5-phospho-alpha-D-ribose 1-diphosphate pocket.

It belongs to the UPRTase family. Mg(2+) serves as cofactor.

It carries out the reaction UMP + diphosphate = 5-phospho-alpha-D-ribose 1-diphosphate + uracil. The protein operates within pyrimidine metabolism; UMP biosynthesis via salvage pathway; UMP from uracil: step 1/1. Allosterically activated by GTP. Its function is as follows. Catalyzes the conversion of uracil and 5-phospho-alpha-D-ribose 1-diphosphate (PRPP) to UMP and diphosphate. The chain is Uracil phosphoribosyltransferase from Paraburkholderia phymatum (strain DSM 17167 / CIP 108236 / LMG 21445 / STM815) (Burkholderia phymatum).